The chain runs to 139 residues: Actin-depolymerizing factor (139 aa).

Residues 5–139 enclose the ADF-H domain; the sequence is SSGMAVDDEC…SMDIIKARAF (135 aa).

This sequence belongs to the actin-binding proteins ADF family. As to expression, preferentially in mature anther.

Actin-depolymerizing protein. Severs actin filaments (F-actin) and binds to actin monomers. The chain is Actin-depolymerizing factor from Lilium longiflorum (Trumpet lily).